The chain runs to 466 residues: Ras-GEF domain-containing family member 1C (466 aa).

Disordered stretches follow at residues 1-35 (MPRT…PLLD) and 443-466 (SESP…LGKT). The region spanning 34–164 (LDGAPSSASL…LLQTLHQKLA (131 aa)) is the N-terminal Ras-GEF domain. The Ras-GEF domain occupies 200 to 446 (DPYTLAQQLT…YLASYESESP (247 aa)).

Functionally, guanine nucleotide exchange factor (GEF). The chain is Ras-GEF domain-containing family member 1C (Rasgef1c) from Mus musculus (Mouse).